The sequence spans 279 residues: tRNA (carboxymethyluridine(34)-5-O)-methyltransferase (279 aa).

Residues 172–236 form a disordered region; sequence KSKSKPKTKS…QQQDQEQERE (65 aa). Over residues 200–229 the composition is skewed to basic and acidic residues; the sequence is PKERSEYLQRWKEEQQRSKSLDDNDEKQQQ.

As to quaternary structure, interacts with TRM112.

Its subcellular location is the cytoplasm. The protein resides in the nucleus. It catalyses the reaction 5-(carboxymethyl)uridine(34) in tRNA + S-adenosyl-L-methionine = 5-(2-methoxy-2-oxoethyl)uridine(34) in tRNA + S-adenosyl-L-homocysteine. Required for the methylation of the wobble bases at position 34 in tRNA. Appears to have a role in stress-response. The chain is tRNA (carboxymethyluridine(34)-5-O)-methyltransferase (TRM9) from Saccharomyces cerevisiae (strain ATCC 204508 / S288c) (Baker's yeast).